A 547-amino-acid chain; its full sequence is GMP synthase [glutamine-hydrolyzing] (547 aa).

Residues 12–210 enclose the Glutamine amidotransferase type-1 domain; it reads KVLILDFGSQ…VLEIAGAKPD (199 aa). Cys89 (nucleophile) is an active-site residue. Active-site residues include His184 and Glu186. One can recognise a GMPS ATP-PPase domain in the interval 211–403; that stretch reads WIMRDHIEEA…LGLPPEMVYR (193 aa). 238–244 lines the ATP pocket; sequence SGGVDSS.

In terms of assembly, homodimer.

It carries out the reaction XMP + L-glutamine + ATP + H2O = GMP + L-glutamate + AMP + diphosphate + 2 H(+). It participates in purine metabolism; GMP biosynthesis; GMP from XMP (L-Gln route): step 1/1. Catalyzes the synthesis of GMP from XMP. This chain is GMP synthase [glutamine-hydrolyzing], found in Ralstonia nicotianae (strain ATCC BAA-1114 / GMI1000) (Ralstonia solanacearum).